The sequence spans 273 residues: Translation initiation factor 2 subunit alpha (273 aa).

In terms of domain architecture, S1 motif spans 12-83 (GEFVVATVKN…EKGHIDLSLK (72 aa)).

The protein belongs to the eIF-2-alpha family. Heterotrimer composed of an alpha, a beta and a gamma chain.

Its function is as follows. eIF-2 functions in the early steps of protein synthesis by forming a ternary complex with GTP and initiator tRNA. This is Translation initiation factor 2 subunit alpha from Thermococcus gammatolerans (strain DSM 15229 / JCM 11827 / EJ3).